Consider the following 177-residue polypeptide: MLLSDKAIRSLIREGKLIIDPLYEDSIRENGVDMRIGPEIAFPIVRGEVMDPTKDDPSLHFTVRRFSDEGIIIPGNTSILLVTEEYIKMPDDVAALCGLRSSIARWGFIAAPTLVDAGFEGQLTIEVMWTRPAPVRLYRGIRFLHVVFFRTEGKVERPYSGAYQGQRGVTLPKRLEK.

Residues 100 to 105 (RSSIAR) and Asp116 each bind dCTP. Glu126 serves as the catalytic Proton donor/acceptor. 2 residues coordinate dCTP: Tyr159 and Gln166.

The protein belongs to the dCTP deaminase family. Homotrimer.

The catalysed reaction is dCTP + H2O + H(+) = dUTP + NH4(+). It functions in the pathway pyrimidine metabolism; dUMP biosynthesis; dUMP from dCTP (dUTP route): step 1/2. Catalyzes the deamination of dCTP to dUTP. This chain is dCTP deaminase, found in Korarchaeum cryptofilum (strain OPF8).